A 365-amino-acid polypeptide reads, in one-letter code: Heat-inducible transcription repressor HrcA (365 aa).

Belongs to the HrcA family.

In terms of biological role, negative regulator of class I heat shock genes (grpE-dnaK-dnaJ and groELS operons). Prevents heat-shock induction of these operons. In Nodularia spumigena, this protein is Heat-inducible transcription repressor HrcA.